The following is a 561-amino-acid chain: 2-succinyl-5-enolpyruvyl-6-hydroxy-3-cyclohexene-1-carboxylate synthase (561 aa).

This sequence belongs to the TPP enzyme family. MenD subfamily. As to quaternary structure, homodimer. It depends on Mg(2+) as a cofactor. Mn(2+) is required as a cofactor. The cofactor is thiamine diphosphate.

The catalysed reaction is isochorismate + 2-oxoglutarate + H(+) = 5-enolpyruvoyl-6-hydroxy-2-succinyl-cyclohex-3-ene-1-carboxylate + CO2. The protein operates within quinol/quinone metabolism; 1,4-dihydroxy-2-naphthoate biosynthesis; 1,4-dihydroxy-2-naphthoate from chorismate: step 2/7. It functions in the pathway quinol/quinone metabolism; menaquinone biosynthesis. Its function is as follows. Catalyzes the thiamine diphosphate-dependent decarboxylation of 2-oxoglutarate and the subsequent addition of the resulting succinic semialdehyde-thiamine pyrophosphate anion to isochorismate to yield 2-succinyl-5-enolpyruvyl-6-hydroxy-3-cyclohexene-1-carboxylate (SEPHCHC). This is 2-succinyl-5-enolpyruvyl-6-hydroxy-3-cyclohexene-1-carboxylate synthase from Proteus mirabilis (strain HI4320).